A 1202-amino-acid polypeptide reads, in one-letter code: Probable DNA polymerase (1202 aa).

The protein belongs to the DNA polymerase type-B family.

It localises to the mitochondrion. It catalyses the reaction DNA(n) + a 2'-deoxyribonucleoside 5'-triphosphate = DNA(n+1) + diphosphate. This Ascobolus immersus protein is Probable DNA polymerase.